The following is a 303-amino-acid chain: Beta-carotene 3-hydroxylase 2, chloroplastic (303 aa).

Residues 1–52 constitute a chloroplast transit peptide; it reads MAAGLSTIAVTLKPLNRSSFSANHPISTAVFPPSLRFNGFRRRKILTVCFVV. 2 helical membrane passes run 96-116 and 130-150; these read YLIA…MAVY and VLEM…MEFW. In terms of domain architecture, Fatty acid hydroxylase spans 143-270; that stretch reads AAVGMEFWAR…KFKGVPYGLF (128 aa). The short motif at 155-160 is the Histidine box-1 element; that stretch reads HRALWH. The Histidine box-2 signature appears at 165 to 171; that stretch reads NMHESHH. The next 2 helical transmembrane spans lie at 180 to 200 and 206 to 226; these read LNDV…YYGF and VPGL…AYMF. The Histidine box-3 motif lies at 228–233; the sequence is HDGLVH. Residues 254-258 carry the Histidine box-4 motif; it reads HQLHH.

It belongs to the sterol desaturase family. Homodimer. In terms of tissue distribution, expressed in leaves, flowers, stems, roots and siliques.

It is found in the plastid. It localises to the chloroplast membrane. The catalysed reaction is all-trans-beta-carotene + 4 reduced [2Fe-2S]-[ferredoxin] + 2 O2 + 4 H(+) = all-trans-zeaxanthin + 4 oxidized [2Fe-2S]-[ferredoxin] + 2 H2O. Nonheme diiron monooxygenase involved in the biosynthesis of xanthophylls. Specific for beta-ring hydroxylations of beta-carotene. Also has a low activity toward the beta- and epsilon-rings of alpha-carotene. No activity with acyclic carotenoids such as lycopene and neurosporene. Uses ferredoxin as an electron donor. The chain is Beta-carotene 3-hydroxylase 2, chloroplastic (BETA-OHASE 2) from Arabidopsis thaliana (Mouse-ear cress).